The sequence spans 146 residues: Hemoglobin subunit beta (146 aa).

Residues 2 to 146 form the Globin domain; it reads QWSDSERTII…VVMFLGKQYH (145 aa). Residues His-63 and His-92 each coordinate heme b.

Belongs to the globin family. As to quaternary structure, heterotetramer of two alpha chains and two beta chains. Red blood cells.

In terms of biological role, involved in oxygen transport from the lung to the various peripheral tissues. This chain is Hemoglobin subunit beta (hbb), found in Artedidraco orianae (Barbeled plunderfish).